Reading from the N-terminus, the 289-residue chain is MKKLSFQQIILTLQNYWQDYGCGILQPYDAHVGAGTFHPATVLRCLGTKPWSVAYVQPSRRPGDSRYGMHPNRMQHYYQFQVILKPSPDDIQDLYLKNLECLGIDLKNHDIRFVEDDWESPTLGASGLGWEVWCDGMEVSQFTYMQQIGGIECRPVACEITYGLERLALYIQGVDVVKALDWNGQIGEKALKYGEVDFEAERQFSKYNLELADSKMLLRHFKDSEEQCERLVKANLPMPAYDECLKASHYFNQLNALGVISVTERASYVLRVRHLARICCMKWLELSGE.

This sequence belongs to the class-II aminoacyl-tRNA synthetase family. As to quaternary structure, tetramer of two alpha and two beta subunits.

Its subcellular location is the cytoplasm. The catalysed reaction is tRNA(Gly) + glycine + ATP = glycyl-tRNA(Gly) + AMP + diphosphate. This Rickettsia akari (strain Hartford) protein is Glycine--tRNA ligase alpha subunit.